Here is a 650-residue protein sequence, read N- to C-terminus: MADNLPSDFDVIVIGTGLPESIIAAACSRSGQRVLHVDSRSYYGGNWASFSFSGLLSWLKEYQENNDVVTENSMWQEQILENEEAIPLSSKDKTIQHVEVFCYASQDLHKDVEEAGALQKNHASVTSAQSAEAAEAAETSCLPTAVEPLSMGSCEIPAEQSQCPGPESSPEVNDAEATGKKENSDAKSSTEEPSENVPKVQDNTETPKKNRITYSQIIKEGRRFNIDLVSQLLYSRGLLIDLLIKSNVSRYAEFKNITRILAFREGTVEQVPCSRADVFNSKQLTMVEKRMLMKFLTFCVEYEEHPDEYRAYEGTTFSEYLKTQKLTPNLQYFVLHSIAMTSETTSCTVDGLKATKKFLQCLGRYGNTPFLFPLYGQGELPQCFCRMCAVFGGIYCLRHSVQCLVVDKESRKCKAVIDQFGQRIISKHFIIEDSYLSENTCSRVQYRQISRAVLITDGSVLKTDADQQVSILAVPAEEPGSFGVRVIELCSSTMTCMKGTYLVHLTCMSSKTAREDLERVVQKLFTPYTEIEAENEQVEKPRLLWALYFNMRDSSDISRDCYNDLPSNVYVCSGPDSGLGNDNAVKQAETLFQQICPNEDFCPAPPNPEDIVLDGDSSQQEVPESSVTPETNSETPKESTVLGNPEEPSE.

2 disordered regions span residues 156–208 (IPAE…ETPK) and 603–650 (PAPP…EPSE). Residues 177–190 (ATGKKENSDAKSST) show a composition bias toward basic and acidic residues. The segment covering 616–634 (DSSQQEVPESSVTPETNSE) has biased composition (polar residues).

Belongs to the Rab GDI family. As to quaternary structure, monomer. Heterotrimer composed of RABGGTA, RABGGTB and CHM; within this trimer, RABGGTA and RABGGTB form the catalytic component B, while CHM (component A) mediates Rab protein binding. Can associate with the Rab GGTase dimer (RGGT or component B) prior to Rab protein binding; the association is stabilized by geranylgeranyl pyrophosphate (GGpp). The CHM:RGGT:Rab complex is destabilized by GGpp. Interacts with RAB1A, RAB1B, RAB7A and RAB27A and mediates their prenylation. Interacts with RAB5A. Interacts with the non-phosphorylated forms of RAB3A, RAB3B, RAB3C, RAB3D, RAB5B, RAB5C RAB8A, RAB8B, RAB10, RAB12, RAB35, and RAB43. In terms of tissue distribution, most abundant in the heart, brain, and spleen. Lower levels seen in the lung, liver, muscle and kidney. Extremely low levels seen in the testis.

The protein localises to the cytoplasm. It localises to the cytosol. Its function is as follows. Substrate-binding subunit of the Rab geranylgeranyltransferase (GGTase) complex. Binds unprenylated Rab proteins and presents the substrate peptide to the catalytic component B composed of RABGGTA and RABGGTB, and remains bound to it after the geranylgeranyl transfer reaction. The component A is thought to be regenerated by transferring its prenylated Rab back to the donor membrane. Besides, a pre-formed complex consisting of CHM and the Rab GGTase dimer (RGGT or component B) can bind to and prenylate Rab proteins; this alternative pathway is proposed to be the predominant pathway for Rab protein geranylgeranylation. The sequence is that of Rab proteins geranylgeranyltransferase component A 1 (Chm) from Rattus norvegicus (Rat).